A 115-amino-acid chain; its full sequence is NADH-ubiquinone oxidoreductase chain 3 (115 aa).

The next 3 membrane-spanning stretches (helical) occupy residues 3 to 23 (LILTLLINTLLSSVLVLIAFW), 55 to 75 (FFLVAITFLLFDLEIALLLPL), and 86 to 106 (TMLTMALILISLLAASLAYEW).

Belongs to the complex I subunit 3 family. In terms of assembly, core subunit of respiratory chain NADH dehydrogenase (Complex I) which is composed of 45 different subunits. Interacts with TMEM186. Interacts with TMEM242.

The protein resides in the mitochondrion inner membrane. It catalyses the reaction a ubiquinone + NADH + 5 H(+)(in) = a ubiquinol + NAD(+) + 4 H(+)(out). In terms of biological role, core subunit of the mitochondrial membrane respiratory chain NADH dehydrogenase (Complex I) which catalyzes electron transfer from NADH through the respiratory chain, using ubiquinone as an electron acceptor. Essential for the catalytic activity of complex I. This is NADH-ubiquinone oxidoreductase chain 3 from Rhinoceros unicornis (Greater Indian rhinoceros).